We begin with the raw amino-acid sequence, 278 residues long: MSASSSSTNPMSREDATTLLPSVQDKYGGVMTEMTHPMDPSLFSTLLRSSLSTWTLQGKKGVWIKLPKQLIGLAETAVKEGFWFHHAEKDYLMLVYWIPKEDDTLPANASHRVGIGAFVINHNKEVLVVQEKTGRFQGQGIWKFPTGVVNEGEDIHDGSVREVKEETGVDTEFDQILAFRQTHKAFFGKSDLFFVCMLKPLSLEINAQESEIEAAQWMPWEEYINQPFVQNYELLRYMTDICSAKTNGDYEGFTPLRVSAPDQQGNLYYNTRDLHSRN.

The Nudix hydrolase domain maps to 110–242; that stretch reads SHRVGIGAFV…ELLRYMTDIC (133 aa). A Nudix box motif is present at residues 147–168; sequence GVVNEGEDIHDGSVREVKEETG. Mg(2+) is bound at residue glutamate 162. Residue glutamate 165 is the Proton acceptor of the active site. Residue glutamate 166 participates in Mg(2+) binding.

It belongs to the Nudix hydrolase family. The cofactor is Mg(2+). Mn(2+) is required as a cofactor. In terms of tissue distribution, expressed in roots, stems and leaves.

The enzyme catalyses ADP-D-ribose + H2O = D-ribose 5-phosphate + AMP + 2 H(+). It catalyses the reaction NAD(+) + H2O = beta-nicotinamide D-ribonucleotide + AMP + 2 H(+). The catalysed reaction is NADH + H2O = reduced beta-nicotinamide D-ribonucleotide + AMP + 2 H(+). Its function is as follows. Probably mediates the hydrolysis of some nucleoside diphosphate derivatives. In vitro, it can use both NADH and ADP-ribose as substrates; however the relevance of such substrates in vivo is unclear. Confers tolerance to oxidative stress. The chain is Nudix hydrolase 2 from Arabidopsis thaliana (Mouse-ear cress).